A 266-amino-acid chain; its full sequence is MITPLDAHGNIDYNATNILIKYLEGINVDYLFPMGSTGVFPYFTLKERKDFLKFVRENSKKPIMAGVGSSSINEVNELMKFSMDIGIEAAVLMPPYYIKLNQEAIYHYYKEILSSNDMDLLIYNIPQFTNKIDPETVKNLKSEFSSVKGVKDSSADIRGFMEMLSLSDDDFAVFQGQDDLLFTSLELGASGGVCGTTNFSDGIVRLYHEYKNNREMALKIEKNDVIPLMKKLGKYQFPNAYYEYFYKKNNINGGYRPPMYRVGIEI.

Substrate-binding positions include 36–37, 123–125, and 151–153; these read ST, YNI, and KDS. Residue K151 is the Schiff-base intermediate with substrate of the active site.

This sequence belongs to the DapA family. KDPG aldolase subfamily. In terms of assembly, homotetramer; dimer of dimers.

It carries out the reaction 2-dehydro-3-deoxy-6-phospho-D-gluconate = D-glyceraldehyde 3-phosphate + pyruvate. The enzyme catalyses 2-dehydro-3-deoxy-D-gluconate = D-glyceraldehyde + pyruvate. It catalyses the reaction 2-dehydro-3-deoxy-6-phospho-D-galactonate = D-glyceraldehyde 3-phosphate + pyruvate. The catalysed reaction is 2-dehydro-3-deoxy-D-galactonate = D-glyceraldehyde + pyruvate. It functions in the pathway carbohydrate acid metabolism; 2-dehydro-3-deoxy-D-gluconate degradation; D-glyceraldehyde 3-phosphate and pyruvate from 2-dehydro-3-deoxy-D-gluconate: step 2/2. In terms of biological role, involved in the degradation of glucose via the Entner-Doudoroff pathway. Catalyzes the reversible cleavage of 2-keto-3-deoxy-6-phosphogluconate (KDPG) and 2-keto-3-deoxygluconate (KDG) forming pyruvate and glyceraldehyde 3-phosphate or glyceraldehyde, respectively. It is also able to catalyze the reversible cleavage of 2-keto-3-deoxy-6-phosphogalactonate (KDPGal) and 2-keto-3-deoxygalactonate (KDGal). It is equally active with both D- and L-glyceraldehyde. This chain is 2-dehydro-3-deoxy-D-gluconate/2-dehydro-3-deoxy-phosphogluconate aldolase, found in Picrophilus torridus (strain ATCC 700027 / DSM 9790 / JCM 10055 / NBRC 100828 / KAW 2/3).